A 336-amino-acid chain; its full sequence is Anthranilate phosphoribosyltransferase (336 aa).

5-phospho-alpha-D-ribose 1-diphosphate-binding positions include glycine 83, 86–87 (GD), threonine 91, 93–96 (NIST), 111–119 (KHGNRSVSS), and serine 123. Glycine 83 provides a ligand contact to anthranilate. Serine 95 provides a ligand contact to Mg(2+). An anthranilate-binding site is contributed by asparagine 114. An anthranilate-binding site is contributed by arginine 169. Residues aspartate 227 and glutamate 228 each contribute to the Mg(2+) site.

Belongs to the anthranilate phosphoribosyltransferase family. In terms of assembly, homodimer. The cofactor is Mg(2+).

It catalyses the reaction N-(5-phospho-beta-D-ribosyl)anthranilate + diphosphate = 5-phospho-alpha-D-ribose 1-diphosphate + anthranilate. It participates in amino-acid biosynthesis; L-tryptophan biosynthesis; L-tryptophan from chorismate: step 2/5. Catalyzes the transfer of the phosphoribosyl group of 5-phosphorylribose-1-pyrophosphate (PRPP) to anthranilate to yield N-(5'-phosphoribosyl)-anthranilate (PRA). This chain is Anthranilate phosphoribosyltransferase, found in Vibrio campbellii (strain ATCC BAA-1116).